The following is a 203-amino-acid chain: Large ribosomal subunit protein bL25 (203 aa).

It belongs to the bacterial ribosomal protein bL25 family. CTC subfamily. As to quaternary structure, part of the 50S ribosomal subunit; part of the 5S rRNA/L5/L18/L25 subcomplex. Contacts the 5S rRNA. Binds to the 5S rRNA independently of L5 and L18.

In terms of biological role, this is one of the proteins that binds to the 5S RNA in the ribosome where it forms part of the central protuberance. This is Large ribosomal subunit protein bL25 from Cupriavidus pinatubonensis (strain JMP 134 / LMG 1197) (Cupriavidus necator (strain JMP 134)).